The sequence spans 140 residues: Large-conductance mechanosensitive channel 3 (140 aa).

The next 3 membrane-spanning stretches (helical) occupy residues 8-28, 30-50, and 81-101; these read FISK…AAFG, IVTS…FGGL, and GSFI…FLMV.

It belongs to the MscL family. In terms of assembly, homopentamer.

The protein localises to the cell inner membrane. Functionally, channel that opens in response to stretch forces in the membrane lipid bilayer. May participate in the regulation of osmotic pressure changes within the cell. In Mesorhizobium japonicum (strain LMG 29417 / CECT 9101 / MAFF 303099) (Mesorhizobium loti (strain MAFF 303099)), this protein is Large-conductance mechanosensitive channel 3.